Consider the following 240-residue polypeptide: Probable hydroxyacylglutathione hydrolase (240 aa).

The Zn(2+) site is built by His33, His35, Asp37, His38, His95, and Asp119. Substrate is bound by residues Arg128, 158–160 (HEY), and 234–237 (REEK). His158 is a binding site for Zn(2+).

This sequence belongs to the metallo-beta-lactamase superfamily. Glyoxalase II family. Zn(2+) serves as cofactor.

The enzyme catalyses an S-(2-hydroxyacyl)glutathione + H2O = a 2-hydroxy carboxylate + glutathione + H(+). It functions in the pathway secondary metabolite metabolism; methylglyoxal degradation; (R)-lactate from methylglyoxal: step 2/2. Functionally, thiolesterase that catalyzes the hydrolysis of S-D-lactoyl-glutathione to form glutathione and D-lactic acid. This is Probable hydroxyacylglutathione hydrolase from Schistosoma mansoni (Blood fluke).